The chain runs to 379 residues: Queuine tRNA-ribosyltransferase (379 aa).

The active-site Proton acceptor is Asp96. Substrate-binding positions include Asp96–Phe100, Asp150, Gln196, and Gly223. The interval Gly254–Tyr260 is RNA binding. The active-site Nucleophile is the Asp273. Zn(2+) is bound by residues Cys311, Cys313, Cys316, and His342.

It belongs to the queuine tRNA-ribosyltransferase family. Homodimer. Within each dimer, one monomer is responsible for RNA recognition and catalysis, while the other monomer binds to the replacement base PreQ1. The cofactor is Zn(2+).

The enzyme catalyses 7-aminomethyl-7-carbaguanine + guanosine(34) in tRNA = 7-aminomethyl-7-carbaguanosine(34) in tRNA + guanine. It functions in the pathway tRNA modification; tRNA-queuosine biosynthesis. In terms of biological role, catalyzes the base-exchange of a guanine (G) residue with the queuine precursor 7-aminomethyl-7-deazaguanine (PreQ1) at position 34 (anticodon wobble position) in tRNAs with GU(N) anticodons (tRNA-Asp, -Asn, -His and -Tyr). Catalysis occurs through a double-displacement mechanism. The nucleophile active site attacks the C1' of nucleotide 34 to detach the guanine base from the RNA, forming a covalent enzyme-RNA intermediate. The proton acceptor active site deprotonates the incoming PreQ1, allowing a nucleophilic attack on the C1' of the ribose to form the product. After dissociation, two additional enzymatic reactions on the tRNA convert PreQ1 to queuine (Q), resulting in the hypermodified nucleoside queuosine (7-(((4,5-cis-dihydroxy-2-cyclopenten-1-yl)amino)methyl)-7-deazaguanosine). This chain is Queuine tRNA-ribosyltransferase, found in Treponema denticola (strain ATCC 35405 / DSM 14222 / CIP 103919 / JCM 8153 / KCTC 15104).